Consider the following 503-residue polypeptide: MSQLKLEEISSVIEEKIKNFELDCDMAEVGKVVSYADGVAKVYGLNGVMSYEVLEFETGDKGVAANLEEDSVGVIVFGFGNNIKEGTSVKRTKNLMKVPVGDAVVGRVLNALGEPIDGKGEIETNEFSLIEQKAPGIMDRKSVHEPLQTGIKAIDALVPIGRGQRELIIGDKQTGKTTVAIDAIINQKGQNVICIYVAIGQKESTVAQVVRKLEEYGAMEYSVVINASASDSAAMQYLAPYSGVAMGEYFRDHARHALIVYDDLSKHAVAYREISLILRRPPGREAFPGDVFYIHSRLLERAAKLCDEKGAGSLTALPIVETQAGDVSAYIPTNIISITDGQIFLETDLFYSGIRPAINVGLSVSRVGGAAQIKATKQVSGTLRLDLAQYRELQAFTQFASDLDEASKKQLERGQRMVEVLKQAPYSPLPIEKQVVIIYAGAKGFLDSVSVKKVVDFEEQLHPFLEAKYPQVLEEIHTKKALDKDLEAMLRKVLEEFKLTYSE.

Position 170-177 (170-177 (GDKQTGKT)) interacts with ATP.

The protein belongs to the ATPase alpha/beta chains family. As to quaternary structure, F-type ATPases have 2 components, CF(1) - the catalytic core - and CF(0) - the membrane proton channel. CF(1) has five subunits: alpha(3), beta(3), gamma(1), delta(1), epsilon(1). CF(0) has three main subunits: a(1), b(2) and c(9-12). The alpha and beta chains form an alternating ring which encloses part of the gamma chain. CF(1) is attached to CF(0) by a central stalk formed by the gamma and epsilon chains, while a peripheral stalk is formed by the delta and b chains.

It is found in the cell inner membrane. The catalysed reaction is ATP + H2O + 4 H(+)(in) = ADP + phosphate + 5 H(+)(out). Functionally, produces ATP from ADP in the presence of a proton gradient across the membrane. The alpha chain is a regulatory subunit. The protein is ATP synthase subunit alpha of Helicobacter pylori (strain HPAG1).